The primary structure comprises 510 residues: Major facilitator superfamily domain-containing protein 8 (510 aa).

Residues 1-38 are Cytoplasmic-facing; sequence MASIDDDDDERTPLLQDSHIGELVETQKQLKSRWWSIR. The Dileucine internalization motif motif lies at 14-15; the sequence is LL. A helical transmembrane segment spans residues 39–59; that stretch reads VMYLTMFLSSVGFSIVMTSIW. The Extracellular portion of the chain corresponds to 60-72; it reads PYLQKVDQSADAS. A helical transmembrane segment spans residues 73–93; it reads FLGWVIASFSLGQMVASPLFG. The Cytoplasmic segment spans residues 94-103; sequence LWSNHRPRRE. The chain crosses the membrane as a helical span at residues 104–124; that stretch reads PLVVSITILVAASCLYAYVHV. At 125–132 the chain is on the extracellular side; sequence PASHNKYY. A helical membrane pass occupies residues 133–155; it reads MLLARTFVGFGSGNVAVVRSYVA. Residues 156–171 are Cytoplasmic-facing; sequence GATSLSERTGAMANIS. The helical transmembrane segment at 172–192 threads the bilayer; sequence AFQAMGFILGPAFQAALSVIG. Residues 193-209 are Extracellular-facing; that stretch reads ETGITINGISLQVNMYT. A helical membrane pass occupies residues 210–230; sequence APALMGALLGIGNIILIFAIF. Topologically, residues 231 to 264 are cytoplasmic; sequence REHRVDDLEKNVSSINSESEVTDVEKANEGPIDQ. Residues 265–285 traverse the membrane as a helical segment; sequence IAVISSNILFFVVLFVFAIFE. The Extracellular segment spans residues 286–302; that stretch reads TISTPLTMDMYAWTRTQ. Residues 303 to 323 form a helical membrane-spanning segment; sequence AVFYNGIILAAVGVESVIVFL. Residues 324 to 335 lie on the Cytoplasmic side of the membrane; the sequence is TVKILCKKTGER. Residues 336–356 traverse the membrane as a helical segment; that stretch reads VLLLGGLAVIWIGFFILLPWG. The Extracellular portion of the chain corresponds to 357 to 406; the sequence is NQMPKIQWTDLQNATIHNTTQWTSSIPSSGNHSVEPTGCPVIQTWCLYTP. Residues Asn369 and Asn374 are each glycosylated (N-linked (GlcNAc...) asparagine). A helical transmembrane segment spans residues 407–427; sequence VIHLAQYLTSDILIGVGYPIC. The Cytoplasmic portion of the chain corresponds to 428-445; it reads NVMSYTLYSKIIGPKPQG. Residues 446 to 466 form a helical membrane-spanning segment; it reads LYMGWLTAAGSAARTLGPVFV. Residues 467–476 are Extracellular-facing; that stretch reads SQIYTHLGTR. A helical membrane pass occupies residues 477-497; it reads WTFGIICAFVALSLLHLTAVY. Residues 498-510 lie on the Cytoplasmic side of the membrane; sequence KRLIPFSTRYERL.

The protein belongs to the major facilitator superfamily.

It localises to the lysosome membrane. In terms of biological role, may be a carrier that transport small solutes by using chemiosmotic ion gradients. This chain is Major facilitator superfamily domain-containing protein 8 (mfsd8), found in Xenopus laevis (African clawed frog).